We begin with the raw amino-acid sequence, 192 residues long: uncharacterized protein (192 aa).

To A.aeolicus AQ_054.

This is an uncharacterized protein from Thermotoga maritima (strain ATCC 43589 / DSM 3109 / JCM 10099 / NBRC 100826 / MSB8).